A 436-amino-acid chain; its full sequence is GTPase Der (436 aa).

EngA-type G domains follow at residues Pro-4–Val-167 and Ile-175–Asn-351. GTP contacts are provided by residues Gly-10 to Ser-17, Asp-57 to Ile-61, Asn-119 to Asp-122, Gly-181 to Ser-188, Asp-229 to Met-233, and Asn-294 to Asp-297. The 85-residue stretch at Arg-352–Lys-436 folds into the KH-like domain.

Belongs to the TRAFAC class TrmE-Era-EngA-EngB-Septin-like GTPase superfamily. EngA (Der) GTPase family. In terms of assembly, associates with the 50S ribosomal subunit.

In terms of biological role, GTPase that plays an essential role in the late steps of ribosome biogenesis. The sequence is that of GTPase Der from Streptococcus thermophilus (strain CNRZ 1066).